A 216-amino-acid polypeptide reads, in one-letter code: Imidazole glycerol phosphate synthase subunit HisH (216 aa).

One can recognise a Glutamine amidotransferase type-1 domain in the interval 2-216; sequence RVAIIDYGSG…LISNFLRWKP (215 aa). Catalysis depends on Cys88, which acts as the Nucleophile. Active-site residues include His196 and Glu198.

Heterodimer of HisH and HisF.

It localises to the cytoplasm. The enzyme catalyses 5-[(5-phospho-1-deoxy-D-ribulos-1-ylimino)methylamino]-1-(5-phospho-beta-D-ribosyl)imidazole-4-carboxamide + L-glutamine = D-erythro-1-(imidazol-4-yl)glycerol 3-phosphate + 5-amino-1-(5-phospho-beta-D-ribosyl)imidazole-4-carboxamide + L-glutamate + H(+). It carries out the reaction L-glutamine + H2O = L-glutamate + NH4(+). The protein operates within amino-acid biosynthesis; L-histidine biosynthesis; L-histidine from 5-phospho-alpha-D-ribose 1-diphosphate: step 5/9. In terms of biological role, IGPS catalyzes the conversion of PRFAR and glutamine to IGP, AICAR and glutamate. The HisH subunit catalyzes the hydrolysis of glutamine to glutamate and ammonia as part of the synthesis of IGP and AICAR. The resulting ammonia molecule is channeled to the active site of HisF. This chain is Imidazole glycerol phosphate synthase subunit HisH, found in Rhizobium meliloti (strain 1021) (Ensifer meliloti).